We begin with the raw amino-acid sequence, 176 residues long: Protein OPG163 (176 aa).

A signal peptide spans 1–14 (MDAAFVITPMGVLT).

It belongs to the orthopoxvirus OPG163 family.

The protein localises to the host endosome. In terms of biological role, mildly affects the expression of MHC class II molecules on the surface of host antigen presenting cells (APCs). This Vaccinia virus (strain Western Reserve) (VACV) protein is Protein OPG163 (OPG163).